Reading from the N-terminus, the 117-residue chain is Ribosome-binding factor A (117 aa).

Belongs to the RbfA family. In terms of assembly, monomer. Binds 30S ribosomal subunits, but not 50S ribosomal subunits or 70S ribosomes.

The protein resides in the cytoplasm. One of several proteins that assist in the late maturation steps of the functional core of the 30S ribosomal subunit. Associates with free 30S ribosomal subunits (but not with 30S subunits that are part of 70S ribosomes or polysomes). Required for efficient processing of 16S rRNA. May interact with the 5'-terminal helix region of 16S rRNA. This chain is Ribosome-binding factor A, found in Leptospira interrogans serogroup Icterohaemorrhagiae serovar Lai (strain 56601).